We begin with the raw amino-acid sequence, 296 residues long: MKTKIINLVVVTGMSGAGKTVAIQSFEDIGYFTIDNIPPSLVPKVIELLKHSEETDKIALVVDMRSRVFFDEINDILDQLESNEELNFKILFLDATDGELVSRYKETRRSHPLAADGRVLDGIKLERELLSPLKSLSQNVVDTTKLTPRQLRKAISEQFSSKQDQSSFRIEVLSFGFKYGLPLDADLVFDVRFLPNPYYDPTLRNLTGLDKEVYDFVMTHKESEDFYKNLNHLIKPILPGYQKEGKSVLTIAVGCTGGQHRSVAFAHRLAQDLKNDWTVNETHRDKDRRKETVNRS.

13–20 is a binding site for ATP; sequence GMSGAGKT. 63-66 lines the GTP pocket; that stretch reads DMRS.

This sequence belongs to the RapZ-like family.

In terms of biological role, displays ATPase and GTPase activities. This Streptococcus thermophilus (strain ATCC BAA-250 / LMG 18311) protein is Nucleotide-binding protein stu0831.